The primary structure comprises 375 residues: Protein GOLM2 (375 aa).

At 1–12 the chain is on the cytoplasmic side; sequence MVGFGANRRGGR. A helical; Signal-anchor for type II membrane protein transmembrane segment spans residues 13–33; the sequence is LPSFLLAALLLVIAVLAFNCW. Residues 34-198 adopt a coiled-coil conformation; it reads NAASRQAVLR…REQKATQRIQ (165 aa). The Lumenal segment spans residues 34 to 375; it reads NAASRQAVLR…SKPRFGDGVL (342 aa). 3 disordered regions span residues 81–102, 193–327, and 342–375; these read LEQKEADYSQLSSQLQARDGQV, ATQR…DSQN, and RAVGLQKMKQNDEERDLQNDLVDYSKPRFGDGVL. Composition is skewed to basic and acidic residues over residues 193–204 and 350–375; these read ATQRIQSSKDAE and KQNDEERDLQNDLVDYSKPRFGDGVL.

The protein belongs to the GOLM family.

It is found in the membrane. In Gallus gallus (Chicken), this protein is Protein GOLM2 (GOLM2).